Reading from the N-terminus, the 195-residue chain is Small ribosomal subunit protein uS4 (195 aa).

Positions 109-183 (RRLQTQVFKL…VKRKNLKKNQ (75 aa)) constitute an S4 RNA-binding domain. The interval 165–195 (PFGGGRPGRVKRKNLKKNQGGGGGAAEEEED) is disordered.

This sequence belongs to the universal ribosomal protein uS4 family. In terms of assembly, component of the small ribosomal subunit. Identified in a IGF2BP1-dependent mRNP granule complex containing untranslated mRNAs. Part of the small subunit (SSU) processome, composed of more than 70 proteins and the RNA chaperone small nucleolar RNA (snoRNA) U3.

The protein resides in the cytoplasm. The protein localises to the nucleus. It is found in the nucleolus. Its function is as follows. Component of the small ribosomal subunit. The ribosome is a large ribonucleoprotein complex responsible for the synthesis of proteins in the cell. Part of the small subunit (SSU) processome, first precursor of the small eukaryotic ribosomal subunit. During the assembly of the SSU processome in the nucleolus, many ribosome biogenesis factors, an RNA chaperone and ribosomal proteins associate with the nascent pre-rRNA and work in concert to generate RNA folding, modifications, rearrangements and cleavage as well as targeted degradation of pre-ribosomal RNA by the RNA exosome. The chain is Small ribosomal subunit protein uS4 from Drosophila melanogaster (Fruit fly).